Here is an 864-residue protein sequence, read N- to C-terminus: Translation initiation factor IF-2 (864 aa).

Positions Met1 to Ser252 are disordered. The segment covering Lys78–Asp90 has biased composition (basic and acidic residues). The span at Val106–Pro120 shows a compositional bias: polar residues. Residues Arg150–Gly212 are compositionally biased toward gly residues. The segment covering His239–Ser252 has biased composition (basic and acidic residues). Residues Asn359 to Lys528 form the tr-type G domain. The G1 stretch occupies residues Gly368 to Thr375. Gly368–Thr375 contributes to the GTP binding site. The tract at residues Gly393 to His397 is G2. Residues Asp414–Gly417 are G3. Residues Asp414 to His418 and Asn468 to Asp471 each bind GTP. A G4 region spans residues Asn468 to Asp471. The tract at residues Ser504–Arg506 is G5.

Belongs to the TRAFAC class translation factor GTPase superfamily. Classic translation factor GTPase family. IF-2 subfamily.

The protein localises to the cytoplasm. Functionally, one of the essential components for the initiation of protein synthesis. Protects formylmethionyl-tRNA from spontaneous hydrolysis and promotes its binding to the 30S ribosomal subunits. Also involved in the hydrolysis of GTP during the formation of the 70S ribosomal complex. In Leptospira borgpetersenii serovar Hardjo-bovis (strain L550), this protein is Translation initiation factor IF-2.